The primary structure comprises 145 residues: Selenoprotein M (145 aa).

Residues 1–23 (MSLLLPPLALLLLLAALVAPATA) form the signal peptide. Active-site nucleophile residues include Cys45 and Sec48. The segment at residues 45–48 (CGGU) is a cross-link (cysteinyl-selenocysteine (Cys-Sec)). A non-standard amino acid (selenocysteine) is located at residue Sec48.

Belongs to the selenoprotein M/F family. Widely expressed.

The protein resides in the cytoplasm. It localises to the perinuclear region. The protein localises to the endoplasmic reticulum. It is found in the golgi apparatus. Its function is as follows. May function as a thiol-disulfide oxidoreductase that participates in disulfide bond formation. In Homo sapiens (Human), this protein is Selenoprotein M.